The chain runs to 95 residues: MSLDAATKKQIITEFGTKEGDTGSPEVQVAMLSRRISDLTEHLKTHKHDHHSRRGLLILVGQRRRLLQYLAKKDIQRFRALVDRLGIRRGAAGAK.

Belongs to the universal ribosomal protein uS15 family. In terms of assembly, part of the 30S ribosomal subunit. Forms a bridge to the 50S subunit in the 70S ribosome, contacting the 23S rRNA.

Functionally, one of the primary rRNA binding proteins, it binds directly to 16S rRNA where it helps nucleate assembly of the platform of the 30S subunit by binding and bridging several RNA helices of the 16S rRNA. Forms an intersubunit bridge (bridge B4) with the 23S rRNA of the 50S subunit in the ribosome. The polypeptide is Small ribosomal subunit protein uS15 (Streptomyces avermitilis (strain ATCC 31267 / DSM 46492 / JCM 5070 / NBRC 14893 / NCIMB 12804 / NRRL 8165 / MA-4680)).